Here is a 466-residue protein sequence, read N- to C-terminus: Argininosuccinate lyase (466 aa).

Belongs to the lyase 1 family. Argininosuccinate lyase subfamily.

The protein localises to the cytoplasm. It carries out the reaction 2-(N(omega)-L-arginino)succinate = fumarate + L-arginine. The protein operates within amino-acid biosynthesis; L-arginine biosynthesis; L-arginine from L-ornithine and carbamoyl phosphate: step 3/3. The protein is Argininosuccinate lyase of Brucella abortus (strain S19).